The following is a 120-amino-acid chain: Flagellar protein FliT (120 aa).

A required for homodimerization region spans residues 1-50 (MERHQHLLSEYQQILTLSEQMLVLATEGNWDALVDLEMTYLKAVESTANI). Positions 60–98 (LQDLLREKLRAILDNEIEIKRLLQLRLDRLSDLVGQSTK) are fliD binding.

The protein belongs to the FliT family. As to quaternary structure, homodimer. Interacts with FliD and FlhC.

It is found in the cytoplasm. The protein resides in the cytosol. Dual-function protein that regulates the transcription of class 2 flagellar operons and that also acts as an export chaperone for the filament-capping protein FliD. As a transcriptional regulator, acts as an anti-FlhDC factor; it directly binds FlhC, thus inhibiting the binding of the FlhC/FlhD complex to class 2 promoters, resulting in decreased expression of class 2 flagellar operons. As a chaperone, effects FliD transition to the membrane by preventing its premature polymerization, and by directing it to the export apparatus. In Yersinia enterocolitica serotype O:8 / biotype 1B (strain NCTC 13174 / 8081), this protein is Flagellar protein FliT.